We begin with the raw amino-acid sequence, 432 residues long: MDVARNGARGSVESPPNRKVYMDYNATTPLEPEVIQAVTEAMKEAWGNPSSSYVAGRKAKDIINTARASLAKMIGGKPQDIIFTSGGTESNNLVIHSTVRCFHEQQTLQGRTVDQISPEEGTRPHFITCTVEHDSIRLPLEHLVEDQVAEVTFVPVSKVNGQVEVEDILAAVRPTTCLVTIMLANNETGVIMPISEISRRIKALNQIRAASGLPRVLVHTDAAQALGKRRVDVEDLGVDFLTIVGHKFYGPRIGALYVRGVGKLTPLYPMLFGGGQERNFRPGTENTPMIAGLGKAADLVSENCETYEAHMRDIRDYLEERLEAEFGKRIHLNSRFPGVERLPNTCNFSIQGSQLRGYMVLAQCQTLLASVGASCHSDHEDRPSPVLLSCGIPVDVARNAVRLSVGRSTTRAEVDLIVQDLKQAVNQLEGPV.

Position 1 is an N-acetylmethionine (Met1). A disordered region spans residues 1–20 (MDVARNGARGSVESPPNRKV). Residue Ser117 is modified to Phosphoserine. N6-(pyridoxal phosphate)lysine is present on Lys247. Residue Cys375 is the S-selanylcysteine intermediate of the active site.

The protein belongs to the class-V pyridoxal-phosphate-dependent aminotransferase family. In terms of assembly, homodimer. It depends on pyridoxal 5'-phosphate as a cofactor.

The protein resides in the cytoplasm. It localises to the cytosol. The enzyme catalyses L-selenocysteine + AH2 = hydrogenselenide + L-alanine + A + H(+). In terms of biological role, catalyzes the decomposition of L-selenocysteine to L-alanine and elemental selenium. This Rattus norvegicus (Rat) protein is Selenocysteine lyase (Scly).